We begin with the raw amino-acid sequence, 97 residues long: Aspartyl/glutamyl-tRNA(Asn/Gln) amidotransferase subunit C (97 aa).

It belongs to the GatC family. As to quaternary structure, heterotrimer of A, B and C subunits.

The enzyme catalyses L-glutamyl-tRNA(Gln) + L-glutamine + ATP + H2O = L-glutaminyl-tRNA(Gln) + L-glutamate + ADP + phosphate + H(+). It carries out the reaction L-aspartyl-tRNA(Asn) + L-glutamine + ATP + H2O = L-asparaginyl-tRNA(Asn) + L-glutamate + ADP + phosphate + 2 H(+). Functionally, allows the formation of correctly charged Asn-tRNA(Asn) or Gln-tRNA(Gln) through the transamidation of misacylated Asp-tRNA(Asn) or Glu-tRNA(Gln) in organisms which lack either or both of asparaginyl-tRNA or glutaminyl-tRNA synthetases. The reaction takes place in the presence of glutamine and ATP through an activated phospho-Asp-tRNA(Asn) or phospho-Glu-tRNA(Gln). The chain is Aspartyl/glutamyl-tRNA(Asn/Gln) amidotransferase subunit C from Prochlorococcus marinus (strain MIT 9301).